The following is a 529-amino-acid chain: Delayed-rectifier potassium channel regulatory subunit KCNS1 (529 aa).

Topologically, residues 1–217 (MLMLLVRGTR…LTMENPGYSL (217 aa)) are cytoplasmic. Residues 218 to 239 (PSKLFSCVSISVVLASIAAMCI) form a helical membrane-spanning segment. Residues 240-270 (HSLPEYQAREAAAAVAAVAAGRSPEGVRDDP) lie on the Extracellular side of the membrane. A helical transmembrane segment spans residues 271–293 (VLRRLEYFCIAWFSFEVSSRLLL). Residues 294 to 304 (APSTRNFFCHP) lie on the Cytoplasmic side of the membrane. The chain crosses the membrane as a helical span at residues 305 to 322 (LNLIDIVSVLPFYLTLLA). The Extracellular portion of the chain corresponds to 323 to 340 (GVALGDQGGTGGKELGHL). The helical; Voltage-sensor transmembrane segment at 341 to 361 (GKVVQVFRLMRIFRVLKLARH) threads the bilayer. Over 362–376 (STGLRSLGATLKHSY) the chain is Cytoplasmic. A helical transmembrane segment spans residues 377–398 (REVGILLLYLAVGVSVFSGVAY). The Extracellular portion of the chain corresponds to 399-411 (TAEKEEDVGFNTI). The helical intramembrane region spans 412 to 423 (PACWWWGTVSMT). The Selectivity filter motif lies at 424–429 (TVGYGD). An intramembrane segment occupies 424–431 (TVGYGDVV). The Extracellular portion of the chain corresponds to 432–438 (PVTVAGK). The chain crosses the membrane as a helical span at residues 439-467 (LAASGCILGGILVVALPITIIFNKFSHFY). Residues 468-529 (RRQKALEAAV…PSEPPHPQMY (62 aa)) are Cytoplasmic-facing. The tract at residues 500–529 (LETSREISQEGRSADLETQAPSEPPHPQMY) is disordered. The span at 502 to 514 (TSREISQEGRSAD) shows a compositional bias: basic and acidic residues.

The protein belongs to the potassium channel family. S (TC 1.A.1.2) subfamily. Kv9.1/KCNS1 sub-subfamily. Heterotetramer with KCNB1. Heterotetramer with KCNB2. Does not form homomultimers.

It localises to the cell membrane. Its function is as follows. Potassium channel regulatory subunit that modulate the delayed rectifier voltage-gated potassium channel activity of KCNB1 and KCNB2 by altering their kinetics, expression levels, and shifting the half-inactivation potential to more polarized values. While it does not form functional channels on its own, it can form functional heterotetrameric channels with KCNB1 and KCNB2. Each regulatory subunit has unique regulatory properties that can lead to extensive inhibition, significant changes in kinetics, and/or substantial shifts in the voltage dependencies of the inactivation process. The chain is Delayed-rectifier potassium channel regulatory subunit KCNS1 from Colobus guereza (Mantled guereza).